Reading from the N-terminus, the 877-residue chain is Leucine--tRNA ligase (877 aa).

The 'HIGH' region signature appears at 48 to 58 (PYPSGKLHMGH). Residues 636-640 (KMSKS) carry the 'KMSKS' region motif. Lys639 lines the ATP pocket.

This sequence belongs to the class-I aminoacyl-tRNA synthetase family.

It localises to the cytoplasm. It catalyses the reaction tRNA(Leu) + L-leucine + ATP = L-leucyl-tRNA(Leu) + AMP + diphosphate. This Ralstonia pickettii (strain 12J) protein is Leucine--tRNA ligase.